The primary structure comprises 37 residues: Cytochrome b6-f complex subunit 5 (37 aa).

A helical membrane pass occupies residues 5–25 (LLDGLVLGLVFATLGGLFYAA).

Belongs to the PetG family. In terms of assembly, the 4 large subunits of the cytochrome b6-f complex are cytochrome b6, subunit IV (17 kDa polypeptide, PetD), cytochrome f and the Rieske protein, while the 4 small subunits are PetG, PetL, PetM and PetN. The complex functions as a dimer.

Its subcellular location is the cellular thylakoid membrane. Its function is as follows. Component of the cytochrome b6-f complex, which mediates electron transfer between photosystem II (PSII) and photosystem I (PSI), cyclic electron flow around PSI, and state transitions. PetG is required for either the stability or assembly of the cytochrome b6-f complex. This is Cytochrome b6-f complex subunit 5 from Mastigocladus laminosus (Fischerella sp.).